Here is a 163-residue protein sequence, read N- to C-terminus: Cytochrome c-type biogenesis protein CcmE (163 aa).

Residues 1 to 8 (MNPRRKKR) lie on the Cytoplasmic side of the membrane. Residues 9–29 (LTIILAISAGLAAVIGLVLYA) traverse the membrane as a helical; Signal-anchor for type II membrane protein segment. Over 30-163 (LSQNIDLFYT…TEAQLKGAKQ (134 aa)) the chain is Periplasmic. Residues histidine 131 and tyrosine 135 each coordinate heme.

It belongs to the CcmE/CycJ family.

It is found in the cell inner membrane. In terms of biological role, heme chaperone required for the biogenesis of c-type cytochromes. Transiently binds heme delivered by CcmC and transfers the heme to apo-cytochromes in a process facilitated by CcmF and CcmH. This Aeromonas salmonicida (strain A449) protein is Cytochrome c-type biogenesis protein CcmE.